A 2146-amino-acid polypeptide reads, in one-letter code: YLP motif-containing protein 1 (2146 aa).

Disordered stretches follow at residues 1 to 381 and 562 to 880; these read MYPN…ARLK and PPVM…FKMQ. A compositionally biased stretch (pro residues) spans 14-26; the sequence is YPPPPVPPPPPVA. Composition is skewed to low complexity over residues 27-48 and 58-79; these read LPEA…PSSS and LAQL…LQPH. Pro residues-rich tracts occupy residues 80–92, 101–113, 147–157, 165–175, and 183–194; these read HLPP…PPVM, QPPP…PPGP, PESPPVPPGSY, MPPPQPPPSYY, and YLPPAQPSPSQS. The segment covering 195 to 237 has biased composition (low complexity); the sequence is PPSQSYLAPTPSYSSSSSSSQSYLSHSQSYLPSSQASPSRPSQ. Composition is skewed to polar residues over residues 256–279 and 286–308; these read NKTT…QQQA and STMT…LQQR. Residues 309–319 are compositionally biased toward basic residues; that stretch reads TKVHLPGHKKG. Over residues 325-334 the composition is skewed to basic and acidic residues; sequence DTPEPVKEEV. 3 stretches are compositionally biased toward pro residues: residues 349–368, 562–579, and 586–642; these read EEPP…PPEE, PPVM…PGMP, and GPPP…PQGI. Positions 643 to 663 are enriched in low complexity; sequence PPQLTAAPVPPASSSQSSQVP. The segment covering 692–702 has biased composition (polar residues); sequence AGPSEQVNSKA. Lys-735 carries the post-translational modification N6-methyllysine. Ser-756 carries the phosphoserine modification. The segment covering 758–806 has biased composition (basic and acidic residues); it reads RGPRFDGPRRFEDLGSRCEGPRPKGPRFEGNRPDGPRPRYEGHPAEGTK. Arg-814 is modified (omega-N-methylarginine). Polar residues-rich tracts occupy residues 820–835 and 868–880; these read FYIT…QSGP and DTSS…FKMQ. Phosphoserine is present on Ser-829. Omega-N-methylarginine is present on Arg-831. Lys-891 participates in a covalent cross-link: Glycyl lysine isopeptide (Lys-Gly) (interchain with G-Cter in SUMO2). Disordered stretches follow at residues 895–1211 and 1243–1351; these read AAQS…GRNA and NRED…DDRW. Composition is skewed to polar residues over residues 896–909 and 923–933; these read AQSN…QQEP and NWDQNVQSMET. Lys-983 is covalently cross-linked (Glycyl lysine isopeptide (Lys-Gly) (interchain with G-Cter in SUMO1); alternate). A Glycyl lysine isopeptide (Lys-Gly) (interchain with G-Cter in SUMO2); alternate cross-link involves residue Lys-983. Composition is skewed to basic and acidic residues over residues 994–1012, 1027–1036, and 1053–1093; these read NNQD…RLEG, RMEDTRDKGL, and KQED…REKV. Lys-1053 is covalently cross-linked (Glycyl lysine isopeptide (Lys-Gly) (interchain with G-Cter in SUMO1); alternate). Lys-1053 participates in a covalent cross-link: Glycyl lysine isopeptide (Lys-Gly) (interchain with G-Cter in SUMO2); alternate. Ser-1100 and Ser-1119 each carry phosphoserine. 2 stretches are compositionally biased toward basic and acidic residues: residues 1129–1211 and 1243–1264; these read GSRE…GRNA and NRED…RGPW. Over residues 1266–1276 the composition is skewed to acidic residues; it reads DDWERDQDMDE. Over residues 1277–1328 the composition is skewed to basic and acidic residues; that stretch reads DYNREMERDMDRDVDRISRPMDMYDRSLDNEWDRDYGRPLDEQESQFRERDI. The span at 1330-1342 shows a compositional bias: pro residues; it reads SLPPLPPLPPLPP. Ser-1402 is modified (phosphoserine). Disordered stretches follow at residues 1407–1438, 1469–1573, and 1602–1828; these read PSDV…SLDS, QKEQ…EQER, and IPSA…PPGR. The span at 1417 to 1430 shows a compositional bias: low complexity; that stretch reads AEHMPSSHHSSEMM. Positions 1469–1480 are enriched in basic and acidic residues; the sequence is QKEQLQKMKDFG. Over residues 1505–1520 the composition is skewed to pro residues; that stretch reads MYPPPGSYRPPPPMGK. The segment covering 1521–1539 has biased composition (low complexity); the sequence is PPGSIVRPSAPPARSSVPV. Composition is skewed to pro residues over residues 1540–1562 and 1606–1636; these read TRPP…PPVI and PVLP…PPPV. Residue Lys-1652 forms a Glycyl lysine isopeptide (Lys-Gly) (interchain with G-Cter in SUMO2) linkage. 4 stretches are compositionally biased toward basic and acidic residues: residues 1662–1696, 1704–1774, 1783–1793, and 1809–1828; these read ITLR…EPYF, ADHR…DRPV, GERRTYPEERM, and RVEK…PPGR. Lys-1710 participates in a covalent cross-link: Glycyl lysine isopeptide (Lys-Gly) (interchain with G-Cter in SUMO2). The segment at 2096–2103 is involved in interaction with PPP1CA; the sequence is KKRVRWAD.

As to quaternary structure, interacts with PPP1CA and NCOA5. Forms a complex with ILF2, ILF3, KHDRBS1, RBMX, NCOA5 and PPP1CA. As to expression, expressed in neuronal, neuroblastoma and embryonic kidney cell lines (at protein level).

The protein localises to the nucleus. The protein resides in the nucleus speckle. Its function is as follows. Plays a role in the reduction of telomerase activity during differentiation of embryonic stem cells by binding to the core promoter of TERT and controlling its down-regulation. This is YLP motif-containing protein 1 (YLPM1) from Homo sapiens (Human).